The sequence spans 218 residues: ATP phosphoribosyltransferase (218 aa).

This sequence belongs to the ATP phosphoribosyltransferase family. Short subfamily. In terms of assembly, heteromultimer composed of HisG and HisZ subunits.

It localises to the cytoplasm. The catalysed reaction is 1-(5-phospho-beta-D-ribosyl)-ATP + diphosphate = 5-phospho-alpha-D-ribose 1-diphosphate + ATP. Its pathway is amino-acid biosynthesis; L-histidine biosynthesis; L-histidine from 5-phospho-alpha-D-ribose 1-diphosphate: step 1/9. Catalyzes the condensation of ATP and 5-phosphoribose 1-diphosphate to form N'-(5'-phosphoribosyl)-ATP (PR-ATP). Has a crucial role in the pathway because the rate of histidine biosynthesis seems to be controlled primarily by regulation of HisG enzymatic activity. In Synechococcus elongatus (strain ATCC 33912 / PCC 7942 / FACHB-805) (Anacystis nidulans R2), this protein is ATP phosphoribosyltransferase.